The primary structure comprises 278 residues: HTH-type transcriptional regulator HdfR (278 aa).

An HTH lysR-type domain is found at 1–58 (MDTELLKTFLEVSRTRHFGRAAEALYLTQSAVSFRIRQLENQLGVNLFTRHRNNIRLT). The H-T-H motif DNA-binding region spans 18 to 37 (FGRAAEALYLTQSAVSFRIR).

The protein belongs to the LysR transcriptional regulatory family.

In terms of biological role, negatively regulates the transcription of the flagellar master operon flhDC by binding to the upstream region of the operon. This chain is HTH-type transcriptional regulator HdfR, found in Salmonella newport (strain SL254).